The chain runs to 158 residues: Small ribosomal subunit protein uS19 (158 aa).

It belongs to the universal ribosomal protein uS19 family.

In terms of biological role, protein S19 forms a complex with S13 that binds strongly to the 16S ribosomal RNA. The polypeptide is Small ribosomal subunit protein uS19 (Pyrobaculum neutrophilum (strain DSM 2338 / JCM 9278 / NBRC 100436 / V24Sta) (Thermoproteus neutrophilus)).